The sequence spans 86 residues: Large ribosomal subunit protein bL31 (86 aa).

Residues Tyr65–Lys86 are disordered. Residues Lys76 to Lys86 show a composition bias toward basic and acidic residues.

This sequence belongs to the bacterial ribosomal protein bL31 family. Type A subfamily. Part of the 50S ribosomal subunit.

Its function is as follows. Binds the 23S rRNA. This Prochlorococcus marinus (strain AS9601) protein is Large ribosomal subunit protein bL31.